A 92-amino-acid polypeptide reads, in one-letter code: Small ribosomal subunit protein uS17 (92 aa).

It belongs to the universal ribosomal protein uS17 family. As to quaternary structure, part of the 30S ribosomal subunit.

Its function is as follows. One of the primary rRNA binding proteins, it binds specifically to the 5'-end of 16S ribosomal RNA. In Corynebacterium glutamicum (strain ATCC 13032 / DSM 20300 / JCM 1318 / BCRC 11384 / CCUG 27702 / LMG 3730 / NBRC 12168 / NCIMB 10025 / NRRL B-2784 / 534), this protein is Small ribosomal subunit protein uS17.